We begin with the raw amino-acid sequence, 38 residues long: Mating hormone A-factor 2 (38 aa).

The span at 1 to 12 (MQPITTASTQAT) shows a compositional bias: polar residues. Residues 1 to 20 (MQPITTASTQATQKDKSSEK) form a disordered region. The propeptide occupies 1–23 (MQPITTASTQATQKDKSSEKKDN). Cysteine 35 is modified (cysteine methyl ester). Cysteine 35 is lipidated: S-farnesyl cysteine. The propeptide at 36–38 (VIA) is removed in mature form.

Its subcellular location is the cell membrane. In terms of biological role, the active factor is excreted into the culture medium by haploid cells of the A mating type and acts on cells of the opposite mating type (type alpha). It mediates the conjugation process between the two types by inhibiting the initiation of DNA synthesis in type alpha cells and synchronizing them with type A. The protein is Mating hormone A-factor 2 (MFA2) of Saccharomyces cerevisiae (strain ATCC 204508 / S288c) (Baker's yeast).